The following is a 572-amino-acid chain: Proline--tRNA ligase (572 aa).

It belongs to the class-II aminoacyl-tRNA synthetase family. ProS type 1 subfamily. In terms of assembly, homodimer.

The protein localises to the cytoplasm. It carries out the reaction tRNA(Pro) + L-proline + ATP = L-prolyl-tRNA(Pro) + AMP + diphosphate. In terms of biological role, catalyzes the attachment of proline to tRNA(Pro) in a two-step reaction: proline is first activated by ATP to form Pro-AMP and then transferred to the acceptor end of tRNA(Pro). As ProRS can inadvertently accommodate and process non-cognate amino acids such as alanine and cysteine, to avoid such errors it has two additional distinct editing activities against alanine. One activity is designated as 'pretransfer' editing and involves the tRNA(Pro)-independent hydrolysis of activated Ala-AMP. The other activity is designated 'posttransfer' editing and involves deacylation of mischarged Ala-tRNA(Pro). The misacylated Cys-tRNA(Pro) is not edited by ProRS. The sequence is that of Proline--tRNA ligase from Enterococcus faecalis (strain ATCC 700802 / V583).